We begin with the raw amino-acid sequence, 185 residues long: Gastrokine-1 (185 aa).

A signal peptide spans 1 to 20 (MKFTIAFAGLLGVFLTPALA). The 97-residue stretch at 54–150 (NNGWNSWNAL…MCKGIPTYMA (97 aa)) folds into the BRICHOS domain. Residues C81 and C142 are joined by a disulfide bond.

The protein belongs to the gastrokine family. As to expression, highly expressed specifically in surface cells of the antrum mucosa from where it is secreted.

It is found in the secreted. The protein resides in the cytoplasmic granule. It localises to the golgi apparatus. Its function is as follows. Has mitogenic activity and may be involved in maintaining the integrity of the gastric mucosal epithelium. This chain is Gastrokine-1 (GKN1), found in Sus scrofa (Pig).